A 230-amino-acid chain; its full sequence is Ribonuclease HII (230 aa).

In terms of domain architecture, RNase H type-2 spans 1–224 (MIIIGIDEAG…CKRILDKSKQ (224 aa)). Residues Asp-7, Glu-8, and Asp-112 each coordinate a divalent metal cation.

It belongs to the RNase HII family. The cofactor is Mn(2+). Requires Mg(2+) as cofactor.

Its subcellular location is the cytoplasm. It catalyses the reaction Endonucleolytic cleavage to 5'-phosphomonoester.. Its function is as follows. Endonuclease that specifically degrades the RNA of RNA-DNA hybrids. The protein is Ribonuclease HII (rnhB) of Methanocaldococcus jannaschii (strain ATCC 43067 / DSM 2661 / JAL-1 / JCM 10045 / NBRC 100440) (Methanococcus jannaschii).